The sequence spans 335 residues: Probable cyclin-H (335 aa).

Belongs to the cyclin family. Cyclin C subfamily.

The protein localises to the nucleus. Its function is as follows. Regulates CDK7, the catalytic subunit of the CDK-activating kinase (CAK) enzymatic complex. This is Probable cyclin-H (CYCH) from Echinococcus multilocularis (Fox tapeworm).